The primary structure comprises 206 residues: Small ribosomal subunit protein uS4A (206 aa).

In terms of domain architecture, S4 RNA-binding spans 96 to 156 (GRLDNVVYRM…EKAKKQSRIG (61 aa)).

Belongs to the universal ribosomal protein uS4 family. Part of the 30S ribosomal subunit. Contacts protein S5. The interaction surface between S4 and S5 is involved in control of translational fidelity.

One of the primary rRNA binding proteins, it binds directly to 16S rRNA where it nucleates assembly of the body of the 30S subunit. In terms of biological role, with S5 and S12 plays an important role in translational accuracy. The sequence is that of Small ribosomal subunit protein uS4A from Psychromonas ingrahamii (strain DSM 17664 / CCUG 51855 / 37).